The sequence spans 736 residues: MNPCNNITITPEIIAQHGLKEDEYQRILTLIGREPTFTELGIFSAMWNEHCSYKSSKKWLKTLPTEGKCVIQGPGENAGVVDIGEGQCVVFKMESHNHPSYIEPYQGAATGVGGILRDVFTMGARPVAAMNALRFGAPDHPRTRHLVSGVVSGIGGYSNSFGVPTVGGEVNFDKRYNGNILVNAFVAGIAKTDALFYSKAQGIGLPVVYLGAKTGRDGVGGATMASAEFDDSISEKRPTVQVGDPFTEKCLLEACLELMELGAVVAIQDMGAAGLTSSAVEMGAKGNLGIQLNLDTVPVREENMTAYEMMLSESQERMLMVLKPELEKQAAAIFHKWGLHFSIIGKTTDDLRFRVFHQGEEVVNLPIKELGDEAPVYDRPWSEPVKKTLLKAEDVKKVENLGDALLTLLNSADQSSRRWVYEQYDTLIQGNSLICPGSDAGVIRISNKSKRALAFSSDVTPRYCEADPYEGGKQAVAECWRNISTTGATPLAATDNLNFGNPEKPEIMGQLVFAIKGIGEACRILDFPIVSGNVSLYNETNGGAILPTPTIAGVGLLSDWSKMVTISGMQNGDHIILVGDCGSHLGQSIYARDILNIDAGAPPPVDLQLEKRHGQFVRDVIHNGFVHAAHDISDGGLAIALAEMVIKAGKGIKAKLSNKSPHHAELFGEDQGRYLLAVKPEALNNLKEYAQTHAVSLTELGQVEGDSLNIDGIFTLSVESLIQAYENWFPKFMGEE.

Histidine 50 is a catalytic residue. Tyrosine 53 and lysine 92 together coordinate ATP. Glutamate 94 lines the Mg(2+) pocket. Residues 95 to 98 (SHNH) and arginine 117 each bind substrate. The active-site Proton acceptor is the histidine 96. Aspartate 118 serves as a coordination point for Mg(2+). A substrate-binding site is contributed by glutamine 241. Aspartate 269 is a Mg(2+) binding site. Residue 313–315 (ESQ) coordinates substrate. Aspartate 495 and glycine 532 together coordinate ATP. Residue asparagine 533 coordinates Mg(2+). Residue serine 535 participates in substrate binding.

This sequence belongs to the FGAMS family. In terms of assembly, monomer. Part of the FGAM synthase complex composed of 1 PurL, 1 PurQ and 2 PurS subunits.

Its subcellular location is the cytoplasm. It carries out the reaction N(2)-formyl-N(1)-(5-phospho-beta-D-ribosyl)glycinamide + L-glutamine + ATP + H2O = 2-formamido-N(1)-(5-O-phospho-beta-D-ribosyl)acetamidine + L-glutamate + ADP + phosphate + H(+). The protein operates within purine metabolism; IMP biosynthesis via de novo pathway; 5-amino-1-(5-phospho-D-ribosyl)imidazole from N(2)-formyl-N(1)-(5-phospho-D-ribosyl)glycinamide: step 1/2. Part of the phosphoribosylformylglycinamidine synthase complex involved in the purines biosynthetic pathway. Catalyzes the ATP-dependent conversion of formylglycinamide ribonucleotide (FGAR) and glutamine to yield formylglycinamidine ribonucleotide (FGAM) and glutamate. The FGAM synthase complex is composed of three subunits. PurQ produces an ammonia molecule by converting glutamine to glutamate. PurL transfers the ammonia molecule to FGAR to form FGAM in an ATP-dependent manner. PurS interacts with PurQ and PurL and is thought to assist in the transfer of the ammonia molecule from PurQ to PurL. This chain is Phosphoribosylformylglycinamidine synthase subunit PurL, found in Bartonella tribocorum (strain CIP 105476 / IBS 506).